The chain runs to 292 residues: Keratin-associated protein 10-9 (292 aa).

Tandem repeats lie at residues 26–30 (CCEPP), 31–35 (CCATS), 36–40 (CCAPA), 57–61 (CCQVT), 79–83 (CCQQS), 99–103 (CCVPV), 104–108 (CCKPV), 109–113 (CCVPV), 114–118 (CCGAS), 120–124 (CCQQS), 130–134 (CCASS), 140–144 (CCVPV), 145–149 (CCKPV), 150–154 (CCAPT), 162–166 (CCQQS), 172–176 (CCTSS), 182–186 (YCVPV), 187–191 (CCKPV), 192–196 (CCKPI), 197–201 (CCVPV), 209–213 (CCQQS), 219–223 (CCTTS), 224–228 (CCRPS), 243–247 (CCVPV), and 250–254 (CCAPT). The segment at 26–254 (CCEPPCCATS…VPVSSCCAPT (229 aa)) is 25 X 5 AA repeats of C-C-X(3).

This sequence belongs to the KRTAP type 10 family. In terms of assembly, interacts with hair keratins. In terms of tissue distribution, restricted to a narrow region of the hair fiber cuticle, lying approximately 20 cell layers above the apex of the dermal papilla of the hair root; not detected in any other tissues.

In the hair cortex, hair keratin intermediate filaments are embedded in an interfilamentous matrix, consisting of hair keratin-associated proteins (KRTAP), which are essential for the formation of a rigid and resistant hair shaft through their extensive disulfide bond cross-linking with abundant cysteine residues of hair keratins. The matrix proteins include the high-sulfur and high-glycine-tyrosine keratins. The polypeptide is Keratin-associated protein 10-9 (KRTAP10-9) (Homo sapiens (Human)).